The following is a 386-amino-acid chain: Phosphoglycerate kinase (386 aa).

Substrate contacts are provided by residues 21 to 23 (DLN), Arg36, 59 to 62 (HLGR), Arg113, and Arg146. Residues Lys197, Glu314, and 340–343 (GGDT) contribute to the ATP site.

The protein belongs to the phosphoglycerate kinase family. As to quaternary structure, monomer.

It is found in the cytoplasm. It catalyses the reaction (2R)-3-phosphoglycerate + ATP = (2R)-3-phospho-glyceroyl phosphate + ADP. It functions in the pathway carbohydrate degradation; glycolysis; pyruvate from D-glyceraldehyde 3-phosphate: step 2/5. This Azotobacter vinelandii (strain DJ / ATCC BAA-1303) protein is Phosphoglycerate kinase.